The following is a 121-amino-acid chain: MNAYPVSRLALDAGVSVHIVRDYLLRGLLRPVACTPGGYGLFDDAALQRLCFVRAAFEAGIGLDALARLCRALDAADGDEAAAQLALLRQFVERRREALADLEVQLATLPTEPAQHAESLP.

The HTH merR-type domain maps to 3 to 72 (AYPVSRLALD…LDALARLCRA (70 aa)). A DNA-binding region (H-T-H motif) is located at residues 6–25 (VSRLALDAGVSVHIVRDYLL).

In Pseudomonas aeruginosa, this protein is HTH-type transcriptional regulator MerD (merD).